Reading from the N-terminus, the 219-residue chain is MKDGSGGFNGVERRGLMFVLSSPSGAGKTTLSRMLVDEAPGLTMSVSATTRPRRPGEVDGRDYYFVDRPKFDAMVEADEFLEWAHVFDNCYGTPRAPVEAALAAGRDVLFDIDWQGTQQLRSRASNDVVSVFILPPSVQDLEHRLHTRAQDSDEVIRGRMKKAGDEMSHFDAYDYIVVNDNIGVAFESVKAILRAEQLKRERQIGIEAFVRDMRRQLEK.

The Guanylate kinase-like domain maps to 15-194; that stretch reads GLMFVLSSPS…AFESVKAILR (180 aa). 22-29 provides a ligand contact to ATP; the sequence is SPSGAGKT.

This sequence belongs to the guanylate kinase family.

The protein localises to the cytoplasm. It carries out the reaction GMP + ATP = GDP + ADP. Essential for recycling GMP and indirectly, cGMP. This Rhodopseudomonas palustris (strain BisB5) protein is Guanylate kinase.